The primary structure comprises 158 residues: SsrA-binding protein (158 aa).

Belongs to the SmpB family.

It localises to the cytoplasm. Functionally, required for rescue of stalled ribosomes mediated by trans-translation. Binds to transfer-messenger RNA (tmRNA), required for stable association of tmRNA with ribosomes. tmRNA and SmpB together mimic tRNA shape, replacing the anticodon stem-loop with SmpB. tmRNA is encoded by the ssrA gene; the 2 termini fold to resemble tRNA(Ala) and it encodes a 'tag peptide', a short internal open reading frame. During trans-translation Ala-aminoacylated tmRNA acts like a tRNA, entering the A-site of stalled ribosomes, displacing the stalled mRNA. The ribosome then switches to translate the ORF on the tmRNA; the nascent peptide is terminated with the 'tag peptide' encoded by the tmRNA and targeted for degradation. The ribosome is freed to recommence translation, which seems to be the essential function of trans-translation. This Roseiflexus sp. (strain RS-1) protein is SsrA-binding protein.